The sequence spans 695 residues: Lysophospholipase 2 (695 aa).

Residues 1–19 (MQLSVLIASVLAAGAAVDA) form the signal peptide. N-linked (GlcNAc...) asparagine glycosylation is found at Asn26, Asn72, Asn83, Asn115, Asn152, Asn171, Asn207, Asn269, Asn335, Asn379, Asn480, Asn504, Asn513, Asn532, Asn556, Asn573, Asn620, Asn626, Asn644, and Asn648. The region spanning 28–577 (SCPDNANFIR…TNYCWNGTID (550 aa)) is the PLA2c domain. The interval 612–662 (NTGSGTKSNSSSKTNSTLVTSSRATSTGTLISNSSSNSTVSSTAARSSTSS) is disordered.

Belongs to the lysophospholipase family.

The protein localises to the secreted. It is found in the cell wall. It carries out the reaction a 1-acyl-sn-glycero-3-phosphocholine + H2O = sn-glycerol 3-phosphocholine + a fatty acid + H(+). Its function is as follows. Catalyzes the release of fatty acids from lysophospholipids. Phospholipase B may well contribute to pathogenicity by abetting the fungus in damaging and traversing host cell membranes, processes which likely increase the rapidity of disseminated infection. This chain is Lysophospholipase 2, found in Candida glabrata (strain ATCC 2001 / BCRC 20586 / JCM 3761 / NBRC 0622 / NRRL Y-65 / CBS 138) (Yeast).